We begin with the raw amino-acid sequence, 518 residues long: Putative malate dehydrogenase 1B (518 aa).

The protein belongs to the LDH/MDH superfamily. MDH type 2 family.

This chain is Putative malate dehydrogenase 1B (MDH1B), found in Homo sapiens (Human).